The primary structure comprises 104 residues: Large ribosomal subunit protein uL24 (104 aa).

The protein belongs to the universal ribosomal protein uL24 family. Part of the 50S ribosomal subunit.

In terms of biological role, one of two assembly initiator proteins, it binds directly to the 5'-end of the 23S rRNA, where it nucleates assembly of the 50S subunit. Its function is as follows. One of the proteins that surrounds the polypeptide exit tunnel on the outside of the subunit. This Pseudomonas fluorescens (strain ATCC BAA-477 / NRRL B-23932 / Pf-5) protein is Large ribosomal subunit protein uL24.